A 290-amino-acid polypeptide reads, in one-letter code: Chloride intracellular channel exc-4 (290 aa).

Residues Leu37 to Val57 form a helical membrane-spanning segment.

It belongs to the chloride channel CLIC family. In terms of assembly, monomer. In terms of tissue distribution, expressed in the secretory system, hypodermis, vulva, pharyngeal muscle, rectal gland, tubular rectal epithelium cells, and tubular neuronal support cells in the head and tail.

It localises to the cytoplasm. Its subcellular location is the membrane. In terms of biological role, may insert into membranes and form chloride ion channels. Involved in the formation of the excretory canal. Required to prevent cystic lumenal expansions in the excretory cell. Not required for formation of the initial tube, but is required for regulating the size of the tube lumen as it grows. This chain is Chloride intracellular channel exc-4 (exc-4), found in Caenorhabditis elegans.